A 239-amino-acid chain; its full sequence is Mitochondrial fission factor homolog B (239 aa).

The Cytoplasmic segment spans residues 1–219 (MAEINRMQYE…ENKERVKHEM (219 aa)). The segment at 107-139 (EGPAPATPHSKEVRSSGHLKRDGLASENSLRQN) is disordered. Basic and acidic residues predominate over residues 115-130 (HSKEVRSSGHLKRDGL). The stretch at 184-214 (DLALADAASLRRQIIKLNRRLLLLEEENKER) forms a coiled coil. A helical; Anchor for type IV membrane protein membrane pass occupies residues 220 to 237 (TMYSIIIIFGLLNSWLWF). Residues 238–239 (RR) are Extracellular-facing.

It belongs to the Tango11 family.

The protein resides in the mitochondrion outer membrane. It is found in the peroxisome. Plays a role in mitochondrial and peroxisomal fission. Promotes the recruitment and association of the fission mediator dynamin-related protein 1 (DNM1L) to the mitochondrial surface. In Xenopus laevis (African clawed frog), this protein is Mitochondrial fission factor homolog B (mff-b).